The primary structure comprises 161 residues: MIVEGPVLKYGDKIDTDIIIPARHLKYTDPAYLAQHAMEPLDPEFYKKASKGVVIVAGKVFGMGSSREQAAIALKAAGVKAVIAESFARIFYRNCINNGLPLITLPNATKEINEGDVVKINVETGEITVNGRVLKGKGITGMALDILKSGGIMEYLKKVSA.

This sequence belongs to the LeuD family. LeuD type 2 subfamily. In terms of assembly, heterodimer of LeuC and LeuD.

The catalysed reaction is (2R,3S)-3-isopropylmalate = (2S)-2-isopropylmalate. It functions in the pathway amino-acid biosynthesis; L-leucine biosynthesis; L-leucine from 3-methyl-2-oxobutanoate: step 2/4. Catalyzes the isomerization between 2-isopropylmalate and 3-isopropylmalate, via the formation of 2-isopropylmaleate. The chain is 3-isopropylmalate dehydratase small subunit from Metallosphaera sedula (strain ATCC 51363 / DSM 5348 / JCM 9185 / NBRC 15509 / TH2).